A 321-amino-acid chain; its full sequence is Aspartate carbamoyltransferase catalytic subunit (321 aa).

Residues R60 and T61 each coordinate carbamoyl phosphate. K88 is an L-aspartate binding site. Carbamoyl phosphate is bound by residues R110, H138, and Q141. L-aspartate contacts are provided by R171 and R225. Positions 266 and 267 each coordinate carbamoyl phosphate.

It belongs to the aspartate/ornithine carbamoyltransferase superfamily. ATCase family. In terms of assembly, heterododecamer (2C3:3R2) of six catalytic PyrB chains organized as two trimers (C3), and six regulatory PyrI chains organized as three dimers (R2).

The enzyme catalyses carbamoyl phosphate + L-aspartate = N-carbamoyl-L-aspartate + phosphate + H(+). The protein operates within pyrimidine metabolism; UMP biosynthesis via de novo pathway; (S)-dihydroorotate from bicarbonate: step 2/3. Its function is as follows. Catalyzes the condensation of carbamoyl phosphate and aspartate to form carbamoyl aspartate and inorganic phosphate, the committed step in the de novo pyrimidine nucleotide biosynthesis pathway. This chain is Aspartate carbamoyltransferase catalytic subunit, found in Sorangium cellulosum (strain So ce56) (Polyangium cellulosum (strain So ce56)).